A 270-amino-acid polypeptide reads, in one-letter code: MTGQVRVAVIGASGRMGRALLEACDNHDGIVLGAAIERAGSTLVGVDAGEMAGIGHLGLALVDNLDAVADKFDVLIDFTSPEGTLANLEWCARQGKAIVIGTTGFNHAQKEQVVAFAEETPVVMAPNMSVGVNLMWKLLELAAKVMGDYTDIEIIEGHHRHKKDAPSGTALKMGEVIAQALGRDLEKVAVYGREGITGERDRETIGFATIRAGDLVGEHTAMFADIGERLEITHKASSRMTFANGAMRAAKWLAEQKPGLYDMQQVLGLN.

Residues 11-16 and Glu-37 each bind NAD(+); that span reads GASGRM. Arg-38 is an NADP(+) binding site. NAD(+) contacts are provided by residues 101 to 103 and 125 to 128; these read GTT and APNM. His-158 functions as the Proton donor/acceptor in the catalytic mechanism. Residue His-159 coordinates (S)-2,3,4,5-tetrahydrodipicolinate. Lys-162 acts as the Proton donor in catalysis. 168–169 is a binding site for (S)-2,3,4,5-tetrahydrodipicolinate; it reads GT.

This sequence belongs to the DapB family.

It is found in the cytoplasm. It catalyses the reaction (S)-2,3,4,5-tetrahydrodipicolinate + NAD(+) + H2O = (2S,4S)-4-hydroxy-2,3,4,5-tetrahydrodipicolinate + NADH + H(+). The enzyme catalyses (S)-2,3,4,5-tetrahydrodipicolinate + NADP(+) + H2O = (2S,4S)-4-hydroxy-2,3,4,5-tetrahydrodipicolinate + NADPH + H(+). It participates in amino-acid biosynthesis; L-lysine biosynthesis via DAP pathway; (S)-tetrahydrodipicolinate from L-aspartate: step 4/4. Catalyzes the conversion of 4-hydroxy-tetrahydrodipicolinate (HTPA) to tetrahydrodipicolinate. This Shewanella amazonensis (strain ATCC BAA-1098 / SB2B) protein is 4-hydroxy-tetrahydrodipicolinate reductase.